We begin with the raw amino-acid sequence, 280 residues long: uncharacterized protein (280 aa).

The HTH rpiR-type domain maps to 1-78; sequence MDVIQRIKEK…VLLAQSISRA (78 aa). The segment at residues 37–57 is a DNA-binding region (H-T-H motif); it reads ISDLSEKAGVKSEASVVKFYK. One can recognise an SIS domain in the interval 123 to 263; sequence TVDLFKNAQR…YTLLAARDPR (141 aa).

This is an uncharacterized protein from Thermotoga maritima (strain ATCC 43589 / DSM 3109 / JCM 10099 / NBRC 100826 / MSB8).